Here is a 215-residue protein sequence, read N- to C-terminus: Cytochrome b6 (215 aa).

The chain crosses the membrane as a helical span at residues 32 to 52 (VFYCFGGMTLTCFLVQLATGF). Position 35 (C35) interacts with heme c. Residues H86 and H100 each contribute to the heme b site. 3 helical membrane-spanning segments follow: residues 90-110 (ASMMVLMMILHIFRVYLTGGF), 116-136 (LTWITGVILAVLTVSFGVTGY), and 186-206 (LHTLFLPALSVIFLLAHFLMI). 2 residues coordinate heme b: H187 and H202.

It belongs to the cytochrome b family. PetB subfamily. In terms of assembly, the 4 large subunits of the cytochrome b6-f complex are cytochrome b6, subunit IV (17 kDa polypeptide, PetD), cytochrome f and the Rieske protein, while the 4 small subunits are PetG, PetL, PetM and PetN. The complex functions as a dimer. The cofactor is heme b. Heme c is required as a cofactor.

It is found in the plastid. It localises to the chloroplast thylakoid membrane. Its function is as follows. Component of the cytochrome b6-f complex, which mediates electron transfer between photosystem II (PSII) and photosystem I (PSI), cyclic electron flow around PSI, and state transitions. In Cyanidium caldarium (Red alga), this protein is Cytochrome b6.